Consider the following 75-residue polypeptide: Putative membrane protein insertion efficiency factor (75 aa).

The protein belongs to the UPF0161 family.

It localises to the cell membrane. Functionally, could be involved in insertion of integral membrane proteins into the membrane. In Bacillus velezensis (strain DSM 23117 / BGSC 10A6 / LMG 26770 / FZB42) (Bacillus amyloliquefaciens subsp. plantarum), this protein is Putative membrane protein insertion efficiency factor.